Consider the following 81-residue polypeptide: MKTLLLTLVVVTIVCLDLGYTLKCNKLVPLFYKTCPAGKNLCYKMFMVSNLTVPVKRGCIDVCPKNSALVKYVCCNTDRCN.

The N-terminal stretch at 1–21 (MKTLLLTLVVVTIVCLDLGYT) is a signal peptide. Disulfide bonds link C24/C42, C35/C59, C63/C74, and C75/C80.

The protein belongs to the three-finger toxin family. Short-chain subfamily. Type IA cytotoxin sub-subfamily. Monomer in solution; Homodimer and oligomer in the presence of negatively charged lipids forming a pore with a size ranging between 20 and 30 Angstroms. In terms of tissue distribution, expressed by the venom gland.

The protein localises to the secreted. It localises to the target cell membrane. Its function is as follows. Basic protein that binds to cell membrane and depolarizes cardiomyocytes. It also shows lytic activities, but 2-fold less important than that of CTX-A4. It binds to the integrin alpha-V/beta-3 (ITGAV/ITGB3) with a moderate affinity. It may interact with sulfatides in the cell membrane which induces pore formation and cell internalization and is responsible for cytotoxicity in cardiomyocytes. It may also target the mitochondrial membrane and induce mitochondrial swelling and fragmentation. The protein is Cytotoxin 2 of Naja atra (Chinese cobra).